Here is a 119-residue protein sequence, read N- to C-terminus: Large ribosomal subunit protein bL20 (119 aa).

Belongs to the bacterial ribosomal protein bL20 family.

Functionally, binds directly to 23S ribosomal RNA and is necessary for the in vitro assembly process of the 50S ribosomal subunit. It is not involved in the protein synthesizing functions of that subunit. The chain is Large ribosomal subunit protein bL20 from Latilactobacillus sakei subsp. sakei (strain 23K) (Lactobacillus sakei subsp. sakei).